The sequence spans 266 residues: Syntaxin-71 (266 aa).

The Cytoplasmic segment spans residues 1–243 (MTVIDILTRV…TVNQLRSSRN (243 aa)). Position 12 is a phosphoserine (Ser12). Residues 44–87 (ETQIETALEKAELVTKEKNRAAAVAMNAEIRRTKARLSEEVPKL) are a coiled coil. Residues 122-146 (DGTAGGPKSTSAWTPSSTTSRPDIK) form a disordered region. The segment covering 130 to 141 (STSAWTPSSTTS) has biased composition (low complexity). Residues 172–234 (EMRKIKQEQG…KNTNVRLKDT (63 aa)) form the t-SNARE coiled-coil homology domain. The helical; Anchor for type IV membrane protein transmembrane segment at 244–264 (FCIDIVLLCIVLGIAAYLYNV) threads the bilayer. The Vesicular portion of the chain corresponds to 265–266 (LK).

It belongs to the syntaxin family. Part of the t-SNARE complex. As to expression, expressed in root, leaf, stem, flower and silique.

The protein resides in the membrane. In terms of biological role, vesicle trafficking protein that functions in the secretory pathway. This Arabidopsis thaliana (Mouse-ear cress) protein is Syntaxin-71 (SYP71).